Reading from the N-terminus, the 152-residue chain is Xanthine-guanine phosphoribosyltransferase (152 aa).

5-phospho-alpha-D-ribose 1-diphosphate is bound by residues 37–38 (RG), Arg-69, and 88–96 (DDLVDTGGT). Residue Arg-69 coordinates GMP. Asp-89 contributes to the Mg(2+) binding site. The guanine site is built by Asp-92 and Ile-135. Positions 92 and 135 each coordinate xanthine. Residues 92-96 (DTGGT) and 134-135 (WI) each bind GMP.

It belongs to the purine/pyrimidine phosphoribosyltransferase family. XGPT subfamily. In terms of assembly, homotetramer. The cofactor is Mg(2+).

It localises to the cell inner membrane. The catalysed reaction is GMP + diphosphate = guanine + 5-phospho-alpha-D-ribose 1-diphosphate. It carries out the reaction XMP + diphosphate = xanthine + 5-phospho-alpha-D-ribose 1-diphosphate. It catalyses the reaction IMP + diphosphate = hypoxanthine + 5-phospho-alpha-D-ribose 1-diphosphate. Its pathway is purine metabolism; GMP biosynthesis via salvage pathway; GMP from guanine: step 1/1. It participates in purine metabolism; XMP biosynthesis via salvage pathway; XMP from xanthine: step 1/1. Its function is as follows. Purine salvage pathway enzyme that catalyzes the transfer of the ribosyl-5-phosphate group from 5-phospho-alpha-D-ribose 1-diphosphate (PRPP) to the N9 position of the 6-oxopurines guanine and xanthine to form the corresponding ribonucleotides GMP (guanosine 5'-monophosphate) and XMP (xanthosine 5'-monophosphate), with the release of PPi. To a lesser extent, also acts on hypoxanthine. This is Xanthine-guanine phosphoribosyltransferase from Citrobacter koseri (strain ATCC BAA-895 / CDC 4225-83 / SGSC4696).